A 519-amino-acid chain; its full sequence is Maturase K (519 aa).

It belongs to the intron maturase 2 family. MatK subfamily.

The protein resides in the plastid. The protein localises to the chloroplast. In terms of biological role, usually encoded in the trnK tRNA gene intron. Probably assists in splicing its own and other chloroplast group II introns. The protein is Maturase K of Aesculus pavia (Red buckeye).